The chain runs to 294 residues: Thymidylate synthase (294 aa).

Residues Arg-30 and 156–157 (RR) contribute to the dUMP site. The active-site Nucleophile is Cys-176. DUMP contacts are provided by residues 196 to 199 (RSGD), Asn-207, and 237 to 239 (HVY). Asp-199 lines the (6R)-5,10-methylene-5,6,7,8-tetrahydrofolate pocket. Ala-293 contributes to the (6R)-5,10-methylene-5,6,7,8-tetrahydrofolate binding site.

Belongs to the thymidylate synthase family. Homodimer.

It carries out the reaction dUMP + (6R)-5,10-methylene-5,6,7,8-tetrahydrofolate = 7,8-dihydrofolate + dTMP. The protein operates within pyrimidine metabolism; dTTP biosynthesis. The sequence is that of Thymidylate synthase from Ascaris suum (Pig roundworm).